The sequence spans 217 residues: Dephospho-CoA kinase (217 aa).

Residues 2–217 (VIGLTGGIAS…RELARIEEQK (216 aa)) form the DPCK domain. 10–15 (ASGKST) serves as a coordination point for ATP.

The protein belongs to the CoaE family.

It localises to the cytoplasm. It catalyses the reaction 3'-dephospho-CoA + ATP = ADP + CoA + H(+). Its pathway is cofactor biosynthesis; coenzyme A biosynthesis; CoA from (R)-pantothenate: step 5/5. Its function is as follows. Catalyzes the phosphorylation of the 3'-hydroxyl group of dephosphocoenzyme A to form coenzyme A. This is Dephospho-CoA kinase from Lactococcus lactis subsp. lactis (strain IL1403) (Streptococcus lactis).